Here is a 101-residue protein sequence, read N- to C-terminus: MDKTKRLFLKSKRSFRRRLPPIQSGDRIDYRNMTLISRFLSEQGKILSRRVNRLTLKEQRLITIAIKQARILSSLPFLNNEKQFERSGLTARPPGLRTRKK.

The protein belongs to the bacterial ribosomal protein bS18 family. In terms of assembly, part of the 30S ribosomal subunit.

The protein resides in the plastid. Its subcellular location is the chloroplast. The protein is Small ribosomal subunit protein bS18c of Citrus sinensis (Sweet orange).